We begin with the raw amino-acid sequence, 470 residues long: UDP-glycosyltransferase 91A1 (470 aa).

UDP-alpha-D-glucose is bound by residues serine 290, 350–352 (VEQ), 367–375 (HPGWGTIIE), and 389–392 (VYDQ).

Belongs to the UDP-glycosyltransferase family.

In Arabidopsis thaliana (Mouse-ear cress), this protein is UDP-glycosyltransferase 91A1 (UGT91A1).